The sequence spans 236 residues: Ubiquinone biosynthesis O-methyltransferase (236 aa).

4 residues coordinate S-adenosyl-L-methionine: Arg40, Gly59, Asp80, and Leu124.

Belongs to the methyltransferase superfamily. UbiG/COQ3 family.

It catalyses the reaction a 3-demethylubiquinol + S-adenosyl-L-methionine = a ubiquinol + S-adenosyl-L-homocysteine + H(+). It carries out the reaction a 3-(all-trans-polyprenyl)benzene-1,2-diol + S-adenosyl-L-methionine = a 2-methoxy-6-(all-trans-polyprenyl)phenol + S-adenosyl-L-homocysteine + H(+). It participates in cofactor biosynthesis; ubiquinone biosynthesis. Its function is as follows. O-methyltransferase that catalyzes the 2 O-methylation steps in the ubiquinone biosynthetic pathway. In Nitrosococcus oceani (strain ATCC 19707 / BCRC 17464 / JCM 30415 / NCIMB 11848 / C-107), this protein is Ubiquinone biosynthesis O-methyltransferase.